The sequence spans 379 residues: Cobalt-precorrin-5B C(1)-methyltransferase (379 aa).

It belongs to the CbiD family.

It catalyses the reaction Co-precorrin-5B + S-adenosyl-L-methionine = Co-precorrin-6A + S-adenosyl-L-homocysteine. It participates in cofactor biosynthesis; adenosylcobalamin biosynthesis; cob(II)yrinate a,c-diamide from sirohydrochlorin (anaerobic route): step 6/10. In terms of biological role, catalyzes the methylation of C-1 in cobalt-precorrin-5B to form cobalt-precorrin-6A. In Salmonella heidelberg (strain SL476), this protein is Cobalt-precorrin-5B C(1)-methyltransferase.